The sequence spans 206 residues: Small ribosomal subunit protein uS4 (206 aa).

A disordered region spans residues 27 to 47 (PSESKCNMNAAPGQHGGRRGR). The S4 RNA-binding domain maps to 96–158 (QRLDNVVYRM…SRKQIRIQSA (63 aa)).

It belongs to the universal ribosomal protein uS4 family. Part of the 30S ribosomal subunit. Contacts protein S5. The interaction surface between S4 and S5 is involved in control of translational fidelity.

One of the primary rRNA binding proteins, it binds directly to 16S rRNA where it nucleates assembly of the body of the 30S subunit. In terms of biological role, with S5 and S12 plays an important role in translational accuracy. The protein is Small ribosomal subunit protein uS4 of Dichelobacter nodosus (strain VCS1703A).